A 175-amino-acid polypeptide reads, in one-letter code: Nucleoside triphosphate/diphosphate phosphatase (175 aa).

Arginine 23 acts as the Proton donor in catalysis. Mg(2+) is bound by residues asparagine 87, aspartate 103, aspartate 105, aspartate 107, aspartate 120, and glutamate 123.

It belongs to the Ntdp family. Mg(2+) serves as cofactor.

The enzyme catalyses a ribonucleoside 5'-triphosphate + H2O = a ribonucleoside 5'-diphosphate + phosphate + H(+). It catalyses the reaction a ribonucleoside 5'-diphosphate + H2O = a ribonucleoside 5'-phosphate + phosphate + H(+). Has nucleoside phosphatase activity towards nucleoside triphosphates and nucleoside diphosphates. The protein is Nucleoside triphosphate/diphosphate phosphatase of Oceanobacillus iheyensis (strain DSM 14371 / CIP 107618 / JCM 11309 / KCTC 3954 / HTE831).